The sequence spans 497 residues: Cytochrome P450 76AD1 (497 aa).

Residues 4–24 traverse the membrane as a helical segment; it reads ATLAMILAIWFISFHFIKLLF. Cysteine 439 serves as a coordination point for heme.

Belongs to the cytochrome P450 family. Heme serves as cofactor.

It localises to the membrane. The protein operates within pigment biosynthesis; betalain biosynthesis. In terms of biological role, converts L-DOPA to cyclo-DOPA in the betalain pathway. Provides the cyclo-DOPA moiety of all red betacyanins. This is Cytochrome P450 76AD1 from Beta vulgaris (Sugar beet).